Here is a 472-residue protein sequence, read N- to C-terminus: Membrane-bound acylglycerophosphatidylinositol O-acyltransferase MBOAT7 (472 aa).

Over 1 to 5 (MSPEE) the chain is Cytoplasmic. A helical transmembrane segment spans residues 6 to 22 (WTYLVVLLISIPIGFLF). Over 23–33 (KKAGPGLKRWG) the chain is Lumenal. A helical membrane pass occupies residues 34 to 57 (AAAVGLGLTLFTCGPHTLHSLVTI). Topologically, residues 58 to 73 (LGTWALIQAQPCSCHA) are cytoplasmic. A helical transmembrane segment spans residues 74 to 93 (LALAWTFSYLLFFRALSLLG). Residues 94–194 (LPTPTPFTNA…VPSLRPLLRR (101 aa)) lie on the Lumenal side of the membrane. The chain crosses the membrane as a helical span at residues 195–212 (AWPAPLFGLLFLLSSHLF). The Cytoplasmic segment spans residues 213-231 (PLEAVREDAFYARPLPARL). A helical transmembrane segment spans residues 232–261 (FYMIPVFFAFRMRFYVAWIAAECGCIAAGF). Over 262–426 (GAYPVAAKAR…LSLADTLRYW (165 aa)) the chain is Lumenal. Residue Asn-321 is glycosylated (N-linked (GlcNAc...) asparagine). A helical transmembrane segment spans residues 427–447 (ASIYFCIHFLALAALGLGLAL). The Cytoplasmic segment spans residues 448–472 (GGGSPSRRKAASQPTSLAPEKLREE). Residues 453-472 (SRRKAASQPTSLAPEKLREE) form a disordered region.

Belongs to the membrane-bound acyltransferase family. Interacts with SPTSSA; the interaction facilitates MBOAT7 location to mitochondria-associated membranes (MAMs). As to expression, overexpressed in metastatic breast and bladder carcinomas relative to normal breast epithelium and urothelium.

The protein localises to the endoplasmic reticulum membrane. The enzyme catalyses a 1-acyl-sn-glycero-3-phospho-(1D-myo-inositol) + (5Z,8Z,11Z,14Z)-eicosatetraenoyl-CoA = a 1-acyl-2-(5Z,8Z,11Z,14Z-eicosatetraenoyl)-sn-glycero-3-phospho-(1D-myo-inositol) + CoA. It carries out the reaction (5Z,8Z,11Z,14Z)-eicosatetraenoyl-CoA + 1-hexadecanoyl-sn-glycero-3-phosphocholine = 1-hexadecanoyl-2-(5Z,8Z,11Z,14Z-eicosatetraenoyl)-sn-glycero-3-phosphocholine + CoA. It catalyses the reaction a 1-acyl-sn-glycero-3-phospho-(1D-myo-inositol) + an acyl-CoA = a 1,2-diacyl-sn-glycero-3-phospho-(1D-myo-inositol) + CoA. The catalysed reaction is 1-octadecanoyl-sn-glycero-3-phospho-(1D-myo-inositol) + (5Z,8Z,11Z,14Z)-eicosatetraenoyl-CoA = 1-octadecanoyl-2-(5Z,8Z,11Z,14Z-eicosatetraenoyl)-sn-glycero-3-phospho-(1D-myo-inositol) + CoA. The protein operates within lipid metabolism; phospholipid metabolism. Activity is inhibited by thimerosal. Its function is as follows. Acyltransferase which catalyzes the transfer of an acyl group from an acyl-CoA to a lysophosphatidylinositol (1-acylglycerophosphatidylinositol or LPI) leading to the production of a phosphatidylinositol (1,2-diacyl-sn-glycero-3-phosphoinositol or PI) and participates in the reacylation step of the phospholipid remodeling pathway also known as the Lands cycle. Prefers arachidonoyl-CoA as the acyl donor, thus contributing to the regulation of free levels arachidonic acid in cell. In liver, participates in the regulation of triglyceride metabolism through the phosphatidylinositol acyl-chain remodeling regulation. In Homo sapiens (Human), this protein is Membrane-bound acylglycerophosphatidylinositol O-acyltransferase MBOAT7.